We begin with the raw amino-acid sequence, 1141 residues long: MFCLCLSLLGLLLCWPAATRNLLELKVECPHTIGLGQGIVIGSAELPPVPLAKVESLKLESSCNFDLHTSTAAQQAFTKWSWEKKADTAENAKAASTTFQSSSKEVQLRGLCVIPTLVLETASRTRKTVTCFDLSCNQTVCQPTVYLMAPIQTCVTTKSCLLGLGDQRIQVVYEKTYCVSGQLIEGNCFNPLHTIAISQPTHTYDIMTLAVHCFFISKKGGTDDTLKIEKQFETLVEKTGCTENALKGYYACILGTSSEVVYVPAMDDYRSSEILSRMTTAPHGEDHDIDPNAISSLRIVGQLTGKAPSTESSDTVQGIAFAGTPLYTSTSILVRKEDPIYLWSPGIIPEGNHSQCDKKTLPLTWTGFITLPGEIEKTTQCTVFCTLSGPGADCEAYSDTGIFNISSPTCLVNRVQRFRGAEQQVKFVCQRVDLDITVYCNGVKKVILTKTLVIGQCIYTFTSIFSLMPGVAHSLAVELCVPGLHGWATISLLITFCFGWLAIPLLSMIIIRFLLIFTYLCSKYSTDSKFKLIIEKVKQEYQKTMGSMVCEVCQQGCETAKELESHKKSCPHGQCPYCLNPTEATESALQAHFKVCKLTTRFQENLKKSLSTYEPKRGLYRTLSMFRYKSKCYVGLVWCILLTMELIVWAASAETINLEPGWTDTAHGSGIIPLKTDLELDFSLPSSATYTYRRELQNPANEQEKIPFHFQMERQVIHAEIQHLGHWMDGTFNLKTAFHCYGSCIKYAYPWQTAKCFLEKDFEFETGWGCNPPDCPGVGTGCTACGVYLDKLRSVGKVYKILSLKYTRKVCIQLGTEQTCKTIDSNDCLVTTSVKVCMIGTISKFQPGDTLLFLGPLEEGGMIFKQWCTTTCQFGDPGDIMSTPLGMKCPEHAGSFRKKCSFATLPSCQYDGNTVSGYQRMIATKDSFQSFNITEPHITTNSLEWVDPDSSLKDHVNLIVNRDLSFQDLAENPCQVDLSVSSIDGAWGSGVGFNLVCSVSLTECASFLTSIKACDSAMCYGSSTANLVRGQNTVHVVGKGGHSGSKFMCCHDKKCSATGLVAAAPHLDRVTGYNQIDTNKVFDDGAPQCGVHCWFKKSGEWLLGILSGNWMVVAVLIALFIFSLLLFSLCCPRRQNYKKNK.

The first 19 residues, 1 to 19, serve as a signal peptide directing secretion; the sequence is MFCLCLSLLGLLLCWPAAT. Topologically, residues 20–489 are lumenal; sequence RNLLELKVEC…CVPGLHGWAT (470 aa). 6 cysteine pairs are disulfide-bonded: cysteine 29/cysteine 154, cysteine 63/cysteine 160, cysteine 112/cysteine 131, cysteine 136/cysteine 141, cysteine 178/cysteine 188, and cysteine 213/cysteine 252. N-linked (GlcNAc...) asparagine; by host glycosylation is present at asparagine 137. An N-linked (GlcNAc...) asparagine; by host glycan is attached at asparagine 352. Disulfide bonds link cysteine 381/cysteine 440, cysteine 385/cysteine 394, cysteine 410/cysteine 429, and cysteine 457/cysteine 480. Asparagine 404 carries N-linked (GlcNAc...) asparagine; by host glycosylation. Residues 490-510 form a helical membrane-spanning segment; sequence ISLLITFCFGWLAIPLLSMII. Residues 511–632 are Cytoplasmic-facing; it reads IRFLLIFTYL…LSMFRYKSKC (122 aa). The binding to the ribonucleoprotein stretch occupies residues 521-538; it reads CSKYSTDSKFKLIIEKVK. 2 consecutive CCHC-type zinc fingers follow at residues 550 to 570 and 575 to 596; these read CEVCQQGCETAKELESHKKSC and CPYCLNPTEATESALQAHFKVC. 3 binding to the ribonucleoprotein regions span residues 593–610, 597–608, and 616–630; these read FKVCKLTTRFQENLKKSL, KLTTRFQENLKK, and KRGLYRTLSMFRYKS. An inhibition of interferon induction region spans residues 612-653; the sequence is TYEPKRGLYRTLSMFRYKSKCYVGLVWCILLTMELIVWAASA. The ITAM domain occupies 616 to 639; the sequence is KRGLYRTLSMFRYKSKCYVGLVWC. Phosphotyrosine occurs at positions 620 and 633. The YxxL signature appears at 620–623; sequence YRTL. The chain crosses the membrane as a helical span at residues 633–653; that stretch reads YVGLVWCILLTMELIVWAASA. The Lumenal portion of the chain corresponds to 654 to 1109; that stretch reads ETINLEPGWT…EWLLGILSGN (456 aa). 8 cysteine pairs are disulfide-bonded: cysteine 740–cysteine 775, cysteine 744–cysteine 782, cysteine 756–cysteine 889, cysteine 770–cysteine 900, cysteine 785–cysteine 908, cysteine 811–cysteine 820, cysteine 828–cysteine 837, and cysteine 868–cysteine 872. Residues 762-782 form a fusion loop region; it reads FEFETGWGCNPPDCPGVGTGC. Residue asparagine 932 is glycosylated (N-linked (GlcNAc...) asparagine; by host). Disulfide bonds link cysteine 974–cysteine 1004, cysteine 997–cysteine 1049, cysteine 1014–cysteine 1019, cysteine 1050–cysteine 1055, and cysteine 1089–cysteine 1093. A helical membrane pass occupies residues 1110–1130; sequence WMVVAVLIALFIFSLLLFSLC. The segment at 1126–1141 is binding to the ribonucleoprotein; sequence LFSLCCPRRQNYKKNK. The Cytoplasmic segment spans residues 1131–1141; it reads CPRRQNYKKNK.

This sequence belongs to the hantavirus envelope glycoprotein family. In terms of assembly, homodimer. Homotetramer; forms heterotetrameric Gn-Gc spikes in the pre-fusion conformation. Interacts (via C-terminus) with the nucleoprotein. Interacts with host TUFM; this interaction contributes to the virus-induced degradation of mitochondria by autophagy, which leads to degradation of host MAVS and inhibition of type I interferon (IFN) responses. Interacts with host MAP1LC3B; this interaction contributes to the virus-induced degradation of mitochondria by autophagy, which leads to degradation of host MAVS and inhibition of type I interferon (IFN) responses. As to quaternary structure, homodimer. Homotetramer; forms heterotetrameric Gn-Gc spikes in the pre-fusion conformation. Homotrimer; forms homotrimer in the post-fusion conformation at acidic pH. Interacts (via C-terminus) with the nucleoprotein. Post-translationally, envelope polyprotein precursor is quickly cleaved in vivo just after synthesis, presumably by host signal peptidase.

The protein resides in the virion membrane. It is found in the host cell surface. It localises to the host Golgi apparatus membrane. Its subcellular location is the host endoplasmic reticulum membrane. The protein localises to the host mitochondrion. In terms of biological role, forms homotetramers with glycoprotein C at the surface of the virion. Attaches the virion to host cell receptors including integrin alpha5/ITGB1. This attachment induces virion internalization predominantly through clathrin-dependent endocytosis. Mediates the assembly and budding of infectious virus particles through its interaction with the nucleocapsid protein and the viral genome. May dysregulate normal immune and endothelial cell responses through an ITAM motif. Translocates to mitochondria, binds to host TUFM and recruits MAP1LC3B. These interactions induce mitochondrial autophagy and therefore destruction of host MAVS leading to inhibition of type I interferon (IFN) responses. Concomitant breakdown of glycoprotein N is apparently prevented by the nucleoprotein that may inhibit Gn-stimulated autophagosome-lysosome fusion. Interacts with the viral genomic RNA. Inhibits the host RIG-I/TBK1 pathway by disrupting the formation of TBK1-TRAF3 complexes and downstream signaling responses required for IFN-beta transcription. Its function is as follows. Forms homotetramers with glycoprotein N at the surface of the virion. Attaches the virion to host cell receptors including integrin ITGAV/ITGB3. This attachment induces virion internalization predominantly through clathrin-dependent endocytosis. Class II fusion protein that promotes fusion of viral membrane with host endosomal membrane after endocytosis of the virion. This Tula orthohantavirus (TULV) protein is Envelopment polyprotein (GP).